The primary structure comprises 432 residues: Luc7-like protein 3 (432 aa).

The residue at position 1 (Met1) is an N-acetylmethionine. Residues Ser3, Ser110, and Ser115 each carry the phosphoserine modification. Positions 124 to 181 (KNEEKIQVLTDKIDVLLQQIEELGSEGKVEEAQGMMKLVEQLKEERELLRSTTSTIES) form a coiled coil. Lys231 carries the N6-acetyllysine modification. Over residues 234 to 287 (LRKRTEEPDRDERLKKEKQEREEREKEREREREERERKRRREEEEREKERARDR) the composition is skewed to basic and acidic residues. Positions 234–432 (LRKRTEEPDR…IKSEGDTQSN (199 aa)) are disordered. Residues 288 to 301 (ERRKRSRSRSRHSS) are compositionally biased toward basic residues. The span at 302–311 (RTSDRRCSRS) shows a compositional bias: basic and acidic residues. Over residues 312–367 (RDHKRSRSRDRRRSRSRDRRRSRSHDRSERKHRSRSRDRRRSKSRDRKSYKHRSKS) the composition is skewed to basic residues. The span at 368–414 (RDREQDRKSKEKEKKGSDDKKSSVKSSSREKQSEDTNPESKESDTKN) shows a compositional bias: basic and acidic residues. Position 420 is a phosphoserine (Ser420). The segment covering 421–432 (EDIKSEGDTQSN) has biased composition (basic and acidic residues). Lys424 participates in a covalent cross-link: Glycyl lysine isopeptide (Lys-Gly) (interchain with G-Cter in SUMO1); alternate. Lys424 is covalently cross-linked (Glycyl lysine isopeptide (Lys-Gly) (interchain with G-Cter in SUMO2); alternate). Ser425 and Ser431 each carry phosphoserine.

The protein belongs to the Luc7 family. May interact with SFRS1 and form homodimers. Interacts with JMJD6. Interacts with RBM25. Interacts with RSRC1 (via Arg/Ser-rich domain). Interacts with RRP1B.

It is found in the nucleus speckle. In terms of biological role, binds cAMP regulatory element DNA sequence. May play a role in RNA splicing. The sequence is that of Luc7-like protein 3 (Luc7l3) from Mus musculus (Mouse).